A 217-amino-acid chain; its full sequence is Adenylate kinase (217 aa).

Gly-10–Thr-15 contributes to the ATP binding site. Residues Ser-30–Val-59 are NMP. AMP contacts are provided by residues Thr-31, Arg-36, Arg-57 to Val-59, Gly-85 to Arg-88, and Gln-92. Positions Gly-126–Asp-163 are LID. Arg-127 is a binding site for ATP. Zn(2+) is bound by residues Cys-130 and Cys-133. Thr-136–Tyr-137 provides a ligand contact to ATP. The Zn(2+) site is built by Cys-150 and Cys-153. The AMP site is built by Arg-160 and Arg-171. Residue Gln-199 participates in ATP binding.

The protein belongs to the adenylate kinase family. Monomer.

It localises to the cytoplasm. It catalyses the reaction AMP + ATP = 2 ADP. The protein operates within purine metabolism; AMP biosynthesis via salvage pathway; AMP from ADP: step 1/1. Its function is as follows. Catalyzes the reversible transfer of the terminal phosphate group between ATP and AMP. Plays an important role in cellular energy homeostasis and in adenine nucleotide metabolism. The sequence is that of Adenylate kinase from Moorella thermoacetica (strain ATCC 39073 / JCM 9320).